The primary structure comprises 125 residues: Small ribosomal subunit protein uS12m (125 aa).

Disordered regions lie at residues 1-23 (MPTL…RTRA) and 104-125 (LMGI…PKSI). The segment covering 10–23 (HGREEKRRTDRTRA) has biased composition (basic and acidic residues).

The protein belongs to the universal ribosomal protein uS12 family.

It localises to the mitochondrion. Its function is as follows. Protein S12 is involved in the translation initiation step. The chain is Small ribosomal subunit protein uS12m (RPS12) from Raphanus sativus (Radish).